The primary structure comprises 281 residues: MSLKRCRALPVVAIVALVASGVIMFIWSQQRRLIYFPSAGPVPSASSVLPAGRDVVVETQDGMRLGGWYFPHTSGGSGPAVLVCNGNAGDRSMRAELAVALHGLGLSVLLFDYRGYGGNPGRPSEQGLAADARAAQEWLSGQSDVDPARIAYFGESLGAAVAVGLAVQRPPAALVLRSPFTSLAEVGAVHYPWLPLRRLLLDHYPSIERIASVHAPVLVIAGGSDDIVPATLSERLVAAAAEPKRYVVVPGVGHNDPELLDGRVMLDAIRRFLTETAVLGQ.

The next 4 membrane-spanning stretches (helical) occupy residues 8–28 (ALPV…FIWS), 97–117 (LAVA…RGYG), 147–167 (PARI…GLAV), and 210–230 (IASV…IVPA).

This sequence to S.pombe bem46 and yeast YNL320w.

It is found in the cell membrane. This is an uncharacterized protein from Mycobacterium tuberculosis (strain ATCC 25618 / H37Rv).